The following is a 335-amino-acid chain: MATLMDKLITSVAPPSTKPNNKVTVVGVGQVGMACAISILEKGLCDELALVDVVEDKLKGEMMDLQHGSLFLNTHKIVADKDYSVTANSKVVVVTAGVRQQEGESRLDLVQRNVNVFKFIIPQVVKHSPDCIILVVSNPVDILTYVTWKLSGLPKHRVIGSGCNLDSARFRFLMAEKLGVHPTSCHGWILGEHGDSSVAVWSGVNVAGVSLQEMNPAMGSDQDPESWKQVHKQVVDSAYEVIKLKGYTNWAIGMSVADLLETILKNLCRVHPVSTMVKGMYGIENEVFLSLPCVLGSAGLTSVINQKLKDNEVAQLQNSATTLWNVQKDIKDLKS.

Residues 29–57 (GQVG…VEDK) and Arg99 contribute to the NAD(+) site. Arg106, Asn138, and Arg169 together coordinate substrate. Asn138 provides a ligand contact to NAD(+). The active-site Proton acceptor is the His193. Thr248 is a substrate binding site.

It belongs to the LDH/MDH superfamily. LDH family. Homotetramer.

It is found in the cytoplasm. It catalyses the reaction (S)-lactate + NAD(+) = pyruvate + NADH + H(+). It participates in fermentation; pyruvate fermentation to lactate; (S)-lactate from pyruvate: step 1/1. Its function is as follows. Interconverts simultaneously and stereospecifically pyruvate and lactate with concomitant interconversion of NADH and NAD(+). This Sceloporus undulatus (Eastern fence lizard) protein is L-lactate dehydrogenase B chain (LDHB).